A 103-amino-acid polypeptide reads, in one-letter code: Large ribosomal subunit protein bL21 (103 aa).

Belongs to the bacterial ribosomal protein bL21 family. In terms of assembly, part of the 50S ribosomal subunit. Contacts protein L20.

Its function is as follows. This protein binds to 23S rRNA in the presence of protein L20. The polypeptide is Large ribosomal subunit protein bL21 (Brevibacillus brevis (strain 47 / JCM 6285 / NBRC 100599)).